Consider the following 424-residue polypeptide: Trigger factor (424 aa).

The PPIase FKBP-type domain occupies 163-248; the sequence is GDTVVLDFEG…IHEIKAKELP (86 aa).

It belongs to the FKBP-type PPIase family. Tig subfamily.

The protein localises to the cytoplasm. It carries out the reaction [protein]-peptidylproline (omega=180) = [protein]-peptidylproline (omega=0). Its function is as follows. Involved in protein export. Acts as a chaperone by maintaining the newly synthesized protein in an open conformation. Functions as a peptidyl-prolyl cis-trans isomerase. The protein is Trigger factor of Bacillus licheniformis (strain ATCC 14580 / DSM 13 / JCM 2505 / CCUG 7422 / NBRC 12200 / NCIMB 9375 / NCTC 10341 / NRRL NRS-1264 / Gibson 46).